The primary structure comprises 226 residues: Probable septum site-determining protein MinC (226 aa).

This sequence belongs to the MinC family. Interacts with MinD and FtsZ.

Functionally, cell division inhibitor that blocks the formation of polar Z ring septums. Rapidly oscillates between the poles of the cell to destabilize FtsZ filaments that have formed before they mature into polar Z rings. Prevents FtsZ polymerization. In Edwardsiella ictaluri (strain 93-146), this protein is Probable septum site-determining protein MinC.